Reading from the N-terminus, the 554-residue chain is Solute carrier family 22 member 1 (554 aa).

The Cytoplasmic segment spans residues 1–21 (MPTVDDILEQVGESGWFQKQA). A helical membrane pass occupies residues 22 to 42 (FLILCLLSAAFAPICVGIVFL). Residues 43-149 (GFTPDHHCQS…LVCADSWKLD (107 aa)) are Extracellular-facing. N-linked (GlcNAc...) asparagine glycosylation occurs at asparagine 71. A helical membrane pass occupies residues 150 to 170 (LFQSCLNAGFLFGSLGVGYFA). At 171–176 (DRFGRK) the chain is on the cytoplasmic side. The helical transmembrane segment at 177 to 197 (LCLLGTVLVNAVSGVLMAFSP) threads the bilayer. Residues 198–206 (NYMSMLLFR) lie on the Extracellular side of the membrane. Residues 207 to 229 (LLQGLVSKGNWMAGYTLITEFVG) form a helical membrane-spanning segment. Residues 230 to 235 (SGSRRT) lie on the Cytoplasmic side of the membrane. The helical transmembrane segment at 236 to 256 (VAIMYQMAFTVGLVALTGLAY) threads the bilayer. Topologically, residues 257–262 (ALPHWR) are extracellular. Residues 263-283 (WLQLAVSLPTFLFLLYYWCVP) traverse the membrane as a helical segment. The Proline-rich sequence motif lies at 283 to 287 (PESPR). Topologically, residues 284–347 (ESPRWLLSQK…FRTPRLRKRT (64 aa)) are cytoplasmic. Serine 333 carries the post-translational modification Phosphoserine. Residues 348 to 368 (FILMYLWFTDSVLYQGLILHM) form a helical membrane-spanning segment. The Extracellular portion of the chain corresponds to 369–376 (GATSGNLY). A helical transmembrane segment spans residues 377 to 397 (LDFLYSALVEIPGAFIALITI). At 398 to 402 (DRVGR) the chain is on the cytoplasmic side. Residues 403–423 (IYPMAMSNLLAGAACLVMIFI) form a helical membrane-spanning segment. The Extracellular portion of the chain corresponds to 424–431 (SPDLHWLN). Residues 432–452 (IIIMCVGRMGITIAIQMICLV) traverse the membrane as a helical segment. At 453–464 (NAELYPTFVRNL) the chain is on the cytoplasmic side. A helical membrane pass occupies residues 465-485 (GVMVCSSLCDIGGIITPFIVF). Residues 486–492 (RLREVWQ) lie on the Extracellular side of the membrane. The chain crosses the membrane as a helical span at residues 493-513 (ALPLILFAVLGLLAAGVTLLL). Topologically, residues 514–554 (PETKGVALPETMKDAENLGRKAKPKENTIYLKVQTSEPSGT) are cytoplasmic. Threonine 541 is modified (phosphothreonine).

This sequence belongs to the major facilitator (TC 2.A.1) superfamily. Organic cation transporter (TC 2.A.1.19) family. Post-translationally, phosphorylated. Widely expressed with high level in liver. In liver, expressed around the central vein. Expressed in kidney. Expressed in small intestine enterocytes. Localized to peritubular myoid cells, Leydig cells and moderately to the basal membrane of Sertoli cells in testes. Expressed in tracheal and bronchial ciliated epithelium in the respiratory tract. Also expressed in skeletal muscle, stomach, spleen, heart, placentacolon, brain, granulycytes and lympohocytes. In terms of tissue distribution, expressed in liver and in glial cell lines. As to expression, expressed in glial cell lines. Not expressed in liver.

The protein resides in the basolateral cell membrane. Its subcellular location is the apical cell membrane. The protein localises to the lateral cell membrane. It localises to the basal cell membrane. It is found in the cell membrane. It catalyses the reaction 1-methylnicotinamide(out) = 1-methylnicotinamide(in). It carries out the reaction dopamine(out) = dopamine(in). The enzyme catalyses serotonin(out) = serotonin(in). The catalysed reaction is (R)-adrenaline(out) = (R)-adrenaline(in). It catalyses the reaction histamine(out) = histamine(in). It carries out the reaction guanidine(out) = guanidine(in). The enzyme catalyses acetylcholine(in) = acetylcholine(out). The catalysed reaction is thiamine(in) = thiamine(out). It catalyses the reaction agmatine(out) = agmatine(in). It carries out the reaction putrescine(out) = putrescine(in). The enzyme catalyses spermidine(in) = spermidine(out). The catalysed reaction is L-histidyl-L-proline diketopiperazine(in) = L-histidyl-L-proline diketopiperazine(out). It catalyses the reaction (R)-salsolinol(in) = (R)-salsolinol(out). It carries out the reaction prostaglandin F2alpha(out) = prostaglandin F2alpha(in). The enzyme catalyses prostaglandin E2(out) = prostaglandin E2(in). Its activity is regulated as follows. Phosphorylation of the transporter leads to changes in its substrate affinity, resulting in a regulation of the transport activity. In contrast with rat ortholog, ASP uptake is inhibited by protein kinase A (PKA) and C (PKC) activation. ASP uptake is also endogenously activated by calmodulin, the calmodulin-dependent kinase II and LCK tyrosine kinase. Inhibited by cGMP, most likely through a cGMP-binding protein that interacts with OCT1. Functionally, electrogenic voltage-dependent transporter that mediates the transport of a variety of organic cations such as endogenous bioactive amines, cationic drugs and xenobiotics. Functions as a pH- and Na(+)-independent, bidirectional transporter. Cation cellular uptake or release is driven by the electrochemical potential (i.e. membrane potential and concentration gradient) and substrate selectivity. Hydrophobicity is a major requirement for recognition in polyvalent substrates and inhibitors. Primarily expressed at the basolateral membrane of hepatocytes and proximal tubules and involved in the uptake and disposition of cationic compounds by hepatic and renal clearance from the blood flow. Most likely functions as an uptake carrier in enterocytes contributing to the intestinal elimination of organic cations from the systemic circulation. Transports endogenous monoamines such as N-1-methylnicotinamide (NMN), guanidine, histamine, neurotransmitters dopamine, serotonin and adrenaline. Also transports natural polyamines such as spermidine, agmatine and putrescine at low affinity, but relatively high turnover. Involved in the hepatic uptake of vitamin B1/thiamine, hence regulating hepatic lipid and energy metabolism. Mediates the bidirectional transport of acetylcholine (ACh) at the apical membrane of ciliated cell in airway epithelium, thereby playing a role in luminal release of ACh from bronchial epithelium. Transports dopaminergic neuromodulators cyclo(his-pro) and salsolinol with lower efficency. Also capable of transporting non-amine endogenous compounds such as prostaglandin E2 (PGE2) and prostaglandin F2-alpha (PGF2-alpha). May contribute to the transport of cationic compounds in testes across the blood-testis-barrier. Also involved in the uptake of xenobiotics tributylmethylammonium (TBuMA), quinidine, N-methyl-quinine (NMQ), N-methyl-quinidine (NMQD) N-(4,4-azo-n-pentyl)-quinuclidine (APQ), azidoprocainamide methoiodide (AMP), N-(4,4-azo-n-pentyl)-21-deoxyajmalinium (APDA) and 4-(4-(dimethylamino)styryl)-N-methylpyridinium (ASP). Its function is as follows. Mediates the uptake of 1-methyl-4-phenylpyridinium (MPP(+)). In terms of biological role, not able to uptake 1-methyl-4-phenylpyridinium (MPP(+)). This Homo sapiens (Human) protein is Solute carrier family 22 member 1.